Consider the following 980-residue polypeptide: Zinc finger BED domain-containing protein 6 (980 aa).

A required for nucleolar localization region spans residues methionine 1–leucine 89. The interval leucine 89–glutamine 109 is disordered. Residues alanine 130–alanine 187 form a BED-type 1 zinc finger. 4 residues coordinate Zn(2+): cysteine 151, cysteine 154, histidine 175, and histidine 180. Residues leucine 201–aspartate 239 form a disordered region. Residues leucine 203–serine 215 are compositionally biased toward low complexity. The segment at alanine 265–alanine 322 adopts a BED-type 2 zinc-finger fold. The Zn(2+) site is built by cysteine 286, cysteine 289, histidine 310, and histidine 315. The disordered stretch occupies residues alanine 328–glutamine 397. Acidic residues predominate over residues threonine 360–proline 373. Position 383 is a phosphoserine (serine 383). The interval valine 868–leucine 950 is HATC (Hobo-Ac-Tam3) domain.

Expressed in pancreatic islet cells and weakly expressed in surrounding exocrine tissues (at protein level). Expressed in muscle and brain (at protein level). Shows broad tissue distribution with expression detected in brain, stomach, intestine, heart, kidney, liver, lung, skeletal muscle, ovary, spleen, tail and testis.

The protein localises to the nucleus. It localises to the nucleolus. The protein resides in the cytoplasm. Transcriptional repressor which binds to the consensus sequence 5'-GCTCGC-3', transcription regulation may be tissue-specific. Regulates the expression of target genes such as: IGF2, PGAP6/TMEM8, ENHO, and PIANP. Acts as a transcriptional repressor of growth factor IGF2, thereby negatively regulating postnatal growth of muscles and internal organs, especially in females. Negatively regulates myoblast differentiation and myoblast mitochondrial activity via its regulation of IGF2 transcription. Negatively regulates the cell cycle of myoblasts, potentially via transcriptional regulation of the E2F family of transcription factors such as: E2F1 and E2F2. Positively regulates the cell cycle and survival of pancreatic beta cells. Binds to the CDH2 gene and may directly repress CDH2 transcription. Probably by controlling CDH2 expression, regulates pancreatic beta cell adhesion, and formation of cell-to-cell junctions between pancreatic beta cells and neural crest stem cells. May also play a role in embryonic beta cell differentiation. May play a role in insulin sensitivity and glucose clearance. This chain is Zinc finger BED domain-containing protein 6, found in Mus musculus (Mouse).